The sequence spans 456 residues: Cysteine--tRNA ligase (456 aa).

C30 contacts Zn(2+). Residues 32–42 (MTVYDFCHIGH) carry the 'HIGH' region motif. Residues C211, H236, and E240 each contribute to the Zn(2+) site. The 'KMSKS' region motif lies at 268 to 272 (KMSKS). K271 serves as a coordination point for ATP.

Belongs to the class-I aminoacyl-tRNA synthetase family. As to quaternary structure, monomer. Zn(2+) serves as cofactor.

It localises to the cytoplasm. The enzyme catalyses tRNA(Cys) + L-cysteine + ATP = L-cysteinyl-tRNA(Cys) + AMP + diphosphate. The sequence is that of Cysteine--tRNA ligase from Dichelobacter nodosus (strain VCS1703A).